Reading from the N-terminus, the 807-residue chain is Glycerol-3-phosphate acyltransferase (807 aa).

Positions 308 to 313 (CHRSHM) match the HXXXXD motif motif.

This sequence belongs to the GPAT/DAPAT family.

It is found in the cell inner membrane. The catalysed reaction is sn-glycerol 3-phosphate + an acyl-CoA = a 1-acyl-sn-glycero-3-phosphate + CoA. The protein operates within phospholipid metabolism; CDP-diacylglycerol biosynthesis; CDP-diacylglycerol from sn-glycerol 3-phosphate: step 1/3. The chain is Glycerol-3-phosphate acyltransferase from Shewanella halifaxensis (strain HAW-EB4).